Here is a 714-residue protein sequence, read N- to C-terminus: P-loop NTPase domain-containing protein LPA1 (714 aa).

The segment covering 1–11 (MPMPPQCASSK) has biased composition (low complexity). 3 disordered regions span residues 1–42 (MPMP…PPPK), 259–293 (QKLD…PRTE), and 595–689 (FGSE…GSGN). The span at 271–285 (EGRDDTSDDKAHHGS) shows a compositional bias: basic and acidic residues. Acidic residues predominate over residues 595–617 (FGSEEDADDPPDAGTDEDLTDEE). Positions 618–636 (RDMHEIEAGSVDEHSTKSD) are enriched in basic and acidic residues. Polar residues predominate over residues 659–670 (AASSTKNSSNQE).

Expressed in roots, leaf blade shoots, leaf sheath shoots and panicles.

Its function is as follows. Required for the accumulation of phytic acid in seeds. Phytic acid is the primary storage form of phosphorus in cereal grains and other plant seeds. This Oryza sativa subsp. japonica (Rice) protein is P-loop NTPase domain-containing protein LPA1.